A 334-amino-acid chain; its full sequence is Glycosylinositol phosphorylceramide mannosyl transferase 1 (334 aa).

The Cytoplasmic segment spans residues 1–26 (MGGGEVSKEMGACSLAYRRGDQKLRK). The helical; Signal-anchor for type II membrane protein transmembrane segment at 27–49 (FVTARSTKFLLFCCIAFVLVTIV) threads the bilayer. Topologically, residues 50 to 334 (CRSSRPWVNS…AVDSRNLWFW (285 aa)) are lumenal. N-linked (GlcNAc...) asparagine glycosylation occurs at N58. Substrate is bound by residues 145 to 150 (DSLNNR), 166 to 168 (DDD), R196, and 258 to 262 (RNCED). Residue D168 coordinates Mn(2+). A disulfide bridge links C260 with C305. D262 is an active-site residue. The N-linked (GlcNAc...) asparagine glycan is linked to N271. Substrate contacts are provided by residues 289 to 302 (STGI…TEKR) and 292 to 302 (ISSIGGHTEKR).

Belongs to the glycosyltransferase 64 family. The cofactor is Mn(2+). In terms of tissue distribution, expressed in leaves, roots, stem, and flowers.

It is found in the golgi apparatus membrane. It participates in protein modification; protein glycosylation. Its pathway is sphingolipid metabolism. In terms of biological role, mannosyl transferase (ManT) required for the biosynthesis of mannose-carrying glycosylinositol phosphorylceramides (GIPCs). Maybe involved in cell-cell adhesion that maintains the integrity of organs by providing mechanical strength and facilitating the movement of metabolites throughout the plant during development. Prevents abscisic acid- (ABA-) mediated effects on development (e.g. cell size, flowering time, senescence). Probably implicated in beta-(1,4)-galactan biosynthesis thus being a cell-wall synthesis-related (CWSR) protein. This chain is Glycosylinositol phosphorylceramide mannosyl transferase 1, found in Arabidopsis thaliana (Mouse-ear cress).